Reading from the N-terminus, the 454-residue chain is tRNA-2-methylthio-N(6)-dimethylallyladenosine synthase (454 aa).

Residues 6 to 122 (RRYHITTYGC…LQDLLEQVAS (117 aa)) form the MTTase N-terminal domain. 6 residues coordinate [4Fe-4S] cluster: C15, C51, C85, C157, C161, and C164. Residues 143 to 384 (RDSAVTAWVN…GVCAELRSQR (242 aa)) form the Radical SAM core domain. The 65-residue stretch at 383–447 (QRYANRIEEV…SFSLTGEPLS (65 aa)) folds into the TRAM domain.

This sequence belongs to the methylthiotransferase family. MiaB subfamily. As to quaternary structure, monomer. The cofactor is [4Fe-4S] cluster.

It is found in the cytoplasm. The catalysed reaction is N(6)-dimethylallyladenosine(37) in tRNA + (sulfur carrier)-SH + AH2 + 2 S-adenosyl-L-methionine = 2-methylsulfanyl-N(6)-dimethylallyladenosine(37) in tRNA + (sulfur carrier)-H + 5'-deoxyadenosine + L-methionine + A + S-adenosyl-L-homocysteine + 2 H(+). Functionally, catalyzes the methylthiolation of N6-(dimethylallyl)adenosine (i(6)A), leading to the formation of 2-methylthio-N6-(dimethylallyl)adenosine (ms(2)i(6)A) at position 37 in tRNAs that read codons beginning with uridine. This chain is tRNA-2-methylthio-N(6)-dimethylallyladenosine synthase, found in Acaryochloris marina (strain MBIC 11017).